The primary structure comprises 310 residues: MMTDLSLTRDEDEEEAKPLAEEEGAREVADREHMFDKVVTPSDVGKLNRLVIPKQHAERFFPLDSSSNEKGLLLNFEDLTGKSWRFRYSYWNSSQSYVMTKGWSRFVKDKKLDAGDIVSFQRCVGDSGRDSRLFIDWRRRPKVPDHPHFAAGAMFPRFYSFPSTNYSLYNHQQQRHHHSGGGYNYHQIPREFGYGYFVRSVDQRNNPAAAVADPLVIESVPVMMHGRANQELVGTAGKRLRLFGVDMECGESGMTNSTEEESSSSGGSLPRGGGGGASSSSFFQLRLGSSSEDDHFTKKGKSSLSFDLDQ.

The disordered stretch occupies residues 1-26 (MMTDLSLTRDEDEEEAKPLAEEEGAR). The span at 16–26 (AKPLAEEEGAR) shows a compositional bias: basic and acidic residues. The segment at residues 35-141 (FDKVVTPSDV…RLFIDWRRRP (107 aa)) is a DNA-binding region (TF-B3). Residues 251 to 268 (ESGMTNSTEEESSSSGGS) show a composition bias toward low complexity. The disordered stretch occupies residues 251-310 (ESGMTNSTEEESSSSGGSLPRGGGGGASSSSFFQLRLGSSSEDDHFTKKGKSSLSFDLDQ).

Interacts with BRX. Interacts with BZIP30.

It is found in the nucleus. In terms of biological role, regulates lateral organ growth. Functionally redundant with NGA2, NGA3 and NGA4. The polypeptide is B3 domain-containing transcription factor NGA1 (NGA1) (Arabidopsis thaliana (Mouse-ear cress)).